Consider the following 476-residue polypeptide: Ribulose bisphosphate carboxylase large chain (476 aa).

Substrate is bound by residues Asn124 and Thr174. Lys176 (proton acceptor) is an active-site residue. Lys178 serves as a coordination point for substrate. Lys202, Asp204, and Glu205 together coordinate Mg(2+). Lys202 is modified (N6-carboxylysine). His295 serves as the catalytic Proton acceptor. Arg296, His328, and Ser380 together coordinate substrate.

The protein belongs to the RuBisCO large chain family. Type I subfamily. As to quaternary structure, heterohexadecamer of 8 large chains and 8 small chains; disulfide-linked. The disulfide link is formed within the large subunit homodimers. Mg(2+) is required as a cofactor. Post-translationally, the disulfide bond which can form in the large chain dimeric partners within the hexadecamer appears to be associated with oxidative stress and protein turnover.

It localises to the carboxysome. It carries out the reaction 2 (2R)-3-phosphoglycerate + 2 H(+) = D-ribulose 1,5-bisphosphate + CO2 + H2O. The catalysed reaction is D-ribulose 1,5-bisphosphate + O2 = 2-phosphoglycolate + (2R)-3-phosphoglycerate + 2 H(+). In terms of biological role, ruBisCO catalyzes two reactions: the carboxylation of D-ribulose 1,5-bisphosphate, the primary event in carbon dioxide fixation, as well as the oxidative fragmentation of the pentose substrate in the photorespiration process. Both reactions occur simultaneously and in competition at the same active site. The polypeptide is Ribulose bisphosphate carboxylase large chain (Acaryochloris marina (strain MBIC 11017)).